The sequence spans 33 residues: Photosystem II reaction center protein Psb30 (33 aa).

A helical transmembrane segment spans residues V5–L25.

This sequence belongs to the Psb30/Ycf12 family. In terms of assembly, PSII is composed of 1 copy each of membrane proteins PsbA, PsbB, PsbC, PsbD, PsbE, PsbF, PsbH, PsbI, PsbJ, PsbK, PsbL, PsbM, PsbT, PsbX, PsbY, PsbZ, Psb30/Ycf12, peripheral proteins of the oxygen-evolving complex and a large number of cofactors. It forms dimeric complexes.

The protein resides in the plastid. The protein localises to the chloroplast thylakoid membrane. A core subunit of photosystem II (PSII), probably helps stabilize the reaction center. The chain is Photosystem II reaction center protein Psb30 from Pinus koraiensis (Korean pine).